Here is a 77-residue protein sequence, read N- to C-terminus: Distinctin-like peptide (77 aa).

The first 19 residues, 1–19, serve as a signal peptide directing secretion; it reads LKKSLFLVTFLALVPLFLC. Positions 20 to 39 are excised as a propeptide; sequence EEEKREEENEERQDDDQSEE.

The protein belongs to the frog skin active peptide (FSAP) family. Expressed by the skin glands.

It localises to the secreted. Has antimicrobial activity. The sequence is that of Distinctin-like peptide from Pithecopus azureus (Orange-legged monkey tree frog).